The chain runs to 320 residues: MYHNSSQKRHWTFASEEQLARLRADANRKFKCKAVANGKVLPNDPVFLEPHEEITLCKYYEKRLLEFCSVFKPAMPRSVVGTACMYFKRFYLNNSVMEYHPRIIMLTCAFLACKVDEFNVSSPQFVGNLRESPLGQEKTLEQILEYELLLIQQLNFHLIVHNPYRPFEGFLIDLKTRYPLLENPEILRKTADDFLNRVALTDAHLLYTPSQIALTAILSSASRAGITMESYLSESLMLKENRTSLSQLLDIMKSMRNLVKKYEPPRPEEVAALKQKLERCHSAELALNVVTKKRKGYEDDDYVSKKSKHEEVCSPKGSFM.

A Phosphoserine; by CDK8 modification is found at Ser-5. Phosphoserine is present on Ser-132. At Ser-304 the chain carries Phosphoserine; by CDK8.

It belongs to the cyclin family. Cyclin C subfamily. In terms of assembly, associates primarily with CDK7 and MAT1 to form the CAK complex. CAK can further associate with the core-TFIIH to form the TFIIH basal transcription factor.

The protein localises to the nucleus. Functionally, regulates CDK7, the catalytic subunit of the CDK-activating kinase (CAK) enzymatic complex. CAK activates the cyclin-associated kinases CDK1, CDK2, CDK4 and CDK6 by threonine phosphorylation. CAK complexed to the core-TFIIH basal transcription factor activates RNA polymerase II by serine phosphorylation of the repetitive C-terminal domain (CTD) of its large subunit (POLR2A), allowing its escape from the promoter and elongation of the transcripts. Involved in cell cycle control and in RNA transcription by RNA polymerase II. Its expression and activity are constant throughout the cell cycle. This is Cyclin-H (CCNH) from Bos taurus (Bovine).